Here is a 305-residue protein sequence, read N- to C-terminus: tRNA pseudouridine synthase B (305 aa).

Asp39 acts as the Nucleophile in catalysis.

Belongs to the pseudouridine synthase TruB family. Type 1 subfamily.

It carries out the reaction uridine(55) in tRNA = pseudouridine(55) in tRNA. In terms of biological role, responsible for synthesis of pseudouridine from uracil-55 in the psi GC loop of transfer RNAs. The sequence is that of tRNA pseudouridine synthase B from Staphylococcus haemolyticus (strain JCSC1435).